The primary structure comprises 231 residues: MIP18 family protein YHR122W (231 aa).

2 disordered regions span residues 1–26 (MSEFLNENPDILEENQLPTRKEDSTK) and 75–100 (LTSDEDSLPAESEDESVAGGGKEEEE). S2 carries the post-translational modification N-acetylserine. The span at 76–90 (TSDEDSLPAESEDES) shows a compositional bias: acidic residues.

Belongs to the MIP18 family.

Functionally, may play a role in chromosome segregation through establishment of sister chromatid cohesion. This Saccharomyces cerevisiae (strain ATCC 204508 / S288c) (Baker's yeast) protein is MIP18 family protein YHR122W.